The sequence spans 2483 residues: Cation-independent mannose-6-phosphate receptor (2483 aa).

Positions 1 to 35 (MRAVQLGPVPSGPRVALLPPLLLLLLLAAAGSAQA) are cleaved as a signal peptide. Residues 36-2295 (QAVDLDALCS…YKGLSERSQA (2260 aa)) are Lumenal-facing. MRH domains follow at residues 42–158 (ALCS…ACKK), 167–315 (VPCY…ACHR), 321–463 (ESCS…ACIK), 468–613 (LLCG…ACVL), 619–755 (ENCT…ACPE), 758–917 (LECM…ACPI), 925–1072 (QACS…ACTP), 1075–1212 (VDCQ…ACPV), and 1218–1356 (DNCQ…ACPP). Disulfide bonds link Cys44-Cys64 and Cys72-Cys79. N-linked (GlcNAc...) asparagine glycosylation occurs at Asn107. Cystine bridges form between Cys112–Cys144, Cys129–Cys156, Cys169–Cys207, Cys223–Cys230, Cys270–Cys301, Cys283–Cys313, Cys323–Cys361, and Cys369–Cys377. N-linked (GlcNAc...) asparagine glycosylation is found at Asn395 and Asn430. Disulfide bonds link Cys415–Cys449, Cys429–Cys461, Cys470–Cys513, and Cys525–Cys532. Residues Asn537 and Asn575 are each glycosylated (N-linked (GlcNAc...) asparagine). Disulfide bonds link Cys566–Cys599 and Cys580–Cys611. N-linked (GlcNAc...) asparagine glycosylation is present at Asn620. 5 disulfide bridges follow: Cys621–Cys658, Cys666–Cys673, Cys724–Cys753, Cys760–Cys807, and Cys816–Cys823. The N-linked (GlcNAc...) asparagine glycan is linked to Asn740. An N-linked (GlcNAc...) asparagine glycan is attached at Asn864. Disulfide bonds link Cys868/Cys903, Cys886/Cys915, Cys927/Cys964, Cys970/Cys981, Cys1035/Cys1070, Cys1077/Cys1118, and Cys1127/Cys1135. Asn944 is a glycosylation site (N-linked (GlcNAc...) asparagine). The N-linked (GlcNAc...) asparagine glycan is linked to Asn1157. 4 disulfides stabilise this stretch: Cys1170–Cys1198, Cys1183–Cys1210, Cys1220–Cys1255, and Cys1263–Cys1275. A glycan (N-linked (GlcNAc...) asparagine) is linked at Asn1239. The N-linked (GlcNAc...) asparagine glycan is linked to Asn1305. 2 cysteine pairs are disulfide-bonded: Cys1312-Cys1342 and Cys1326-Cys1354. N-linked (GlcNAc...) asparagine glycosylation occurs at Asn1358. MRH domains are found at residues 1360 to 1501 (TECS…ACPV), 1507 to 1641 (DDCQ…ACEQ), 1643 to 1790 (TECT…VCPD), 1795 to 1982 (QGCA…VCPP), 1985 to 2120 (MECK…ACAV), and 2128 to 2273 (VNGT…VCPL). 2 cysteine pairs are disulfide-bonded: Cys1362–Cys1401 and Cys1413–Cys1420. A glycan (N-linked (GlcNAc...) asparagine) is linked at Asn1423. Disulfide bonds link Cys1454-Cys1487, Cys1469-Cys1499, Cys1509-Cys1546, Cys1552-Cys1559, Cys1591-Cys1627, Cys1607-Cys1639, Cys1645-Cys1688, Cys1699-Cys1706, Cys1743-Cys1776, Cys1759-Cys1788, Cys1797-Cys1832, Cys1843-Cys1849, Cys1886-Cys1968, Cys1896-Cys1920, Cys1910-Cys1935, Cys1950-Cys1980, Cys1987-Cys2022, Cys2032-Cys2039, Cys2075-Cys2106, and Cys2089-Cys2118. Asn1532 is a glycosylation site (N-linked (GlcNAc...) asparagine). The N-linked (GlcNAc...) asparagine glycan is linked to Asn1649. A glycan (N-linked (GlcNAc...) asparagine) is linked at Asn1750. Residue Asn1809 is glycosylated (N-linked (GlcNAc...) asparagine). The 47-residue stretch at 1891–1937 (DDGEPCVFPFIYKGKSYDECVLEGRAKLWCSKTANYDRDHEWGFCRQ) folds into the Fibronectin type-II domain. Asn2078 is a glycosylation site (N-linked (GlcNAc...) asparagine). Asn2129 is a glycosylation site (N-linked (GlcNAc...) asparagine). 3 cysteine pairs are disulfide-bonded: Cys2181–Cys2187, Cys2225–Cys2259, and Cys2241–Cys2271. A helical membrane pass occupies residues 2296–2316 (VGAVLSLLLVALTGCLLALLL). The Cytoplasmic portion of the chain corresponds to 2317-2483 (HKKERRETVI…DDSDEDLLHI (167 aa)). The residue at position 2342 (Lys2342) is an N6-acetyllysine. The residue at position 2401 (Ser2401) is a Phosphoserine. The segment at 2415 to 2483 (SGRGAEVESS…DDSDEDLLHI (69 aa)) is disordered. An Omega-N-methylarginine modification is found at Arg2417. Basic and acidic residues-rich tracts occupy residues 2434-2451 (VLKE…GEKA) and 2471-2483 (SFHD…LLHI). Ser2471 and Ser2476 each carry phosphoserine.

Belongs to the MRL1/IGF2R family. As to quaternary structure, binds HA-I and HA-II plasma membrane adapters. Interacts with DPP4; the interaction is direct. Binds GGA1, GGA2 and GGA3. Interacts with the heterotrimeric retromer cargo-selective complex (CSC), formed by VPS26 (VPS26A or VPS26B), VPS29 and VPS35; which is involved in retrograde trafficking of the receptor from endosomes to the Golgi apparatus. Palmitoylated. Undergoes cysteine S-palmitoylation which promotes interaction with the retromer cargo-selective complex which mediates its retrograde trafficking to the Golgi apparatus.

It is found in the golgi apparatus membrane. The protein localises to the endosome membrane. In terms of biological role, mediates the transport of phosphorylated lysosomal enzymes from the Golgi complex and the cell surface to lysosomes. Lysosomal enzymes bearing phosphomannosyl residues bind specifically to mannose-6-phosphate receptors in the Golgi apparatus and the resulting receptor-ligand complex is transported to an acidic prelysosomal compartment where the low pH mediates the dissociation of the complex. The receptor is then recycled back to the Golgi for another round of trafficking through its binding to the retromer. This receptor also binds IGF2. Acts as a positive regulator of T-cell coactivation by binding DPP4. This chain is Cation-independent mannose-6-phosphate receptor (Igf2r), found in Mus musculus (Mouse).